Consider the following 792-residue polypeptide: LPS-assembly protein LptD (792 aa).

The first 22 residues, 1–22 (MYRVLRLLPLPLSVAISLSALA), serve as a signal peptide directing secretion.

Belongs to the LptD family. Component of the lipopolysaccharide transport and assembly complex. Interacts with LptE and LptA.

The protein resides in the cell outer membrane. Together with LptE, is involved in the assembly of lipopolysaccharide (LPS) at the surface of the outer membrane. This chain is LPS-assembly protein LptD, found in Xylella fastidiosa (strain 9a5c).